The following is a 270-amino-acid chain: Decarboxylase NovR (270 aa).

It belongs to the aldolase class II family.

Its pathway is antibiotic biosynthesis; novobiocin biosynthesis. Functionally, may mediate the 2 consecutive oxidative decarboxylation steps in the biosynthesis of the prenylated hydroxybenzoic acid moiety of novobiocin, an aminocoumarin family antibiotic that targets bacterial DNA gyrases. The protein is Decarboxylase NovR (novR) of Streptomyces niveus (Streptomyces spheroides).